The chain runs to 914 residues: Serine/threonine kinase SAD-1 (914 aa).

One can recognise a Protein kinase domain in the interval 47-298 (YKLEKTLGKG…LADVFKHPWV (252 aa)). ATP-binding positions include 53-61 (LGKGQTGLV) and Lys-76. The Proton acceptor role is filled by Asp-169. 3 disordered regions span residues 375-551 (AQED…SPPS), 563-590 (TMNS…SGPW), and 757-914 (NSTQ…ADKV). Residues 393-402 (PPKKRTDSSR) are compositionally biased toward basic and acidic residues. The span at 444-462 (RSSTRDLFGSSSSGSYSAR) shows a compositional bias: low complexity. A compositionally biased stretch (polar residues) spans 473 to 482 (ASRSTNSYHY). Basic and acidic residues predominate over residues 495–526 (AARHVRDAQERRESRDSGRGSSRKESKDRSDK). 2 stretches are compositionally biased toward low complexity: residues 527-551 (SASS…SPPS) and 563-573 (TMNSTNSSTNS). Residues 574-590 (LIAGNSQTSIGSTSGPW) show a composition bias toward polar residues. Low complexity predominate over residues 780 to 796 (DSSVGSACSDSESNASS). Over residues 823 to 837 (SMRSVGSGTANSYKS) the composition is skewed to polar residues. The span at 850-876 (ASSSSASNRYGPSSSSSGSYSNNADYS) shows a compositional bias: low complexity. Residues 882-903 (SQRSNGSSAPKNQYSPGSQRSF) show a composition bias toward polar residues.

The protein belongs to the protein kinase superfamily. CAMK Ser/Thr protein kinase family. SNF1 subfamily. Interacts with strd-1 and nab-1. Mg(2+) is required as a cofactor. As to expression, expressed in neurons. Colocalizes with strd-1 along the dorsal nerve cord.

Its subcellular location is the synapse. The catalysed reaction is L-seryl-[protein] + ATP = O-phospho-L-seryl-[protein] + ADP + H(+). The enzyme catalyses L-threonyl-[protein] + ATP = O-phospho-L-threonyl-[protein] + ADP + H(+). Functionally, regulates both neuronal polarity and synaptic organization when bound to strd-1. Kinase activity is required for the establishment, but not the maintenance, of both processes. Binding to nab-1 is essential for role in restricting axonal fate during neuronal polarization but is not required for regulating synapse morphology. This chain is Serine/threonine kinase SAD-1, found in Caenorhabditis elegans.